The chain runs to 389 residues: Succinate--CoA ligase [ADP-forming] subunit beta (389 aa).

The ATP-grasp domain occupies R9–K236. ATP contacts are provided by residues K45, G52 to G54, A94, and E99. The Mg(2+) site is built by N191 and D205. Residues N256 and G318–T320 contribute to the substrate site.

This sequence belongs to the succinate/malate CoA ligase beta subunit family. As to quaternary structure, heterotetramer of two alpha and two beta subunits. It depends on Mg(2+) as a cofactor.

The enzyme catalyses succinate + ATP + CoA = succinyl-CoA + ADP + phosphate. The catalysed reaction is GTP + succinate + CoA = succinyl-CoA + GDP + phosphate. Its pathway is carbohydrate metabolism; tricarboxylic acid cycle; succinate from succinyl-CoA (ligase route): step 1/1. Its function is as follows. Succinyl-CoA synthetase functions in the citric acid cycle (TCA), coupling the hydrolysis of succinyl-CoA to the synthesis of either ATP or GTP and thus represents the only step of substrate-level phosphorylation in the TCA. The beta subunit provides nucleotide specificity of the enzyme and binds the substrate succinate, while the binding sites for coenzyme A and phosphate are found in the alpha subunit. This chain is Succinate--CoA ligase [ADP-forming] subunit beta, found in Pseudarthrobacter chlorophenolicus (strain ATCC 700700 / DSM 12829 / CIP 107037 / JCM 12360 / KCTC 9906 / NCIMB 13794 / A6) (Arthrobacter chlorophenolicus).